Consider the following 309-residue polypeptide: MKTLIRKFSRTAITVVLVILAFIAIFNAWVYYTESPWTRDARFSADVVAIAPDVSGLITQVNVHNQLVKKGQVLFTIDQPRYQKALEEAQADVAYYQVLAQEKRQEAGRRNRLGVQAMSREEIDQANNVLQTVLHQLAKAQATRDLAKLDLERTVIRAPADGWVTNLNVYTGEFITRGSTAVALVKQNSFYVLAYMEETKLEGVRPGYRAEITPLGSNKVLKGTVDSVAAGVTNASSTRDDKGMATIDSNLEWVRLAQRVPVRIRLDNQQENIWPAGTTATVVVTGKQDRDESQDSFFRKMAHRLREFG.

The chain crosses the membrane as a helical span at residues 12-32 (AITVVLVILAFIAIFNAWVYY).

Belongs to the membrane fusion protein (MFP) (TC 8.A.1) family.

Its subcellular location is the cell inner membrane. Functionally, forms an efflux pump with AaeB. The chain is p-hydroxybenzoic acid efflux pump subunit AaeA from Escherichia coli O157:H7.